Here is a 299-residue protein sequence, read N- to C-terminus: Mitochondrial 2-oxodicarboxylate carrier (299 aa).

3 Solcar repeats span residues 11 to 100 (REAS…YKKL), 107 to 196 (SPAL…VKNM), and 205 to 294 (LEFL…TYSW). 6 helical membrane-spanning segments follow: residues 17–37 (IVAGGSAGLVEICLMHPLDVV), 70–89 (FGFYKGILPPILAETPKRAV), 113–133 (TIAGLGSGLTEAIVVNPFEVV), 167–187 (GLNKGLTATLGRHGVFNMVYF), 205–225 (LEFLRKFGIGLLSGTIASVIN), and 277–297 (LGPGGAVMLLVYEYTYSWLQE).

The protein belongs to the mitochondrial carrier (TC 2.A.29) family.

It is found in the mitochondrion inner membrane. It carries out the reaction 2-oxoadipate(in) + 2-oxoglutarate(out) = 2-oxoadipate(out) + 2-oxoglutarate(in). The enzyme catalyses hexanedioate(in) + 2-oxoglutarate(out) = hexanedioate(out) + 2-oxoglutarate(in). It catalyses the reaction L-2-aminoadipate(in) + 2-oxoglutarate(out) = L-2-aminoadipate(out) + 2-oxoglutarate(in). The catalysed reaction is glutarate(in) + 2-oxoglutarate(out) = glutarate(out) + 2-oxoglutarate(in). It carries out the reaction 2-oxoheptanedioate(in) + 2-oxoglutarate(out) = 2-oxoheptanedioate(out) + 2-oxoglutarate(in). The enzyme catalyses heptanedioate(in) + 2-oxoglutarate(out) = heptanedioate(out) + 2-oxoglutarate(in). It catalyses the reaction citrate(in) + 2-oxoglutarate(out) = citrate(out) + 2-oxoglutarate(in). Transports dicarboxylates across the inner membranes of mitochondria by a counter-exchange mechanism. Can transport 2-oxoadipate (2-oxohexanedioate), 2-oxoglutarate, adipate (hexanedioate), glutarate, and to a lesser extent, pimelate (heptanedioate), 2-oxopimelate (2-oxoheptanedioate), 2-aminoadipate (2-aminohexanedioate), oxaloacetate, and citrate. Plays a central role in catabolism of lysine, hydroxylysine, and tryptophan, by transporting common metabolite intermediates (such as 2-oxoadipate) into the mitochondria, where it is converted into acetyl-CoA and can enter the citric acid (TCA) cycle. This Pongo abelii (Sumatran orangutan) protein is Mitochondrial 2-oxodicarboxylate carrier (SLC25A21).